The following is a 380-amino-acid chain: MRILADENIPLVHAFFSAFGEIRQLPGRAIVSGSLGDADVLLVRSVTRVDAALLEGSRVRFVGTCTIGTDHLDLDYLRRRGIAWASAPGCNARGVVDYVLGSLLSLAERQGVDLASRCYGVVGAGQVGGRLVEVLRGLGWRVLVCDPPRQALERGDFVDLPTLLRECDVLSVHTPLTHEGAHPTRHLFGREQLARLRPGTWLINASRGAVVDNRALREALAGRTDLQAVLDVWEGEPLVDVALAGLCHIATPHIAGYSLDGKLRGTAQVYRAFCEQQGVPPGVLLDELLPPPWLGELGLDGRADPAWALATLCRAVYDPRRDDADFRRSLEGDEQARRSAFDALRKHYPPRREIDGLRVRLSGEAPRLRQLVRALGAEPV.

Positions 45 and 66 each coordinate substrate. NAD(+)-binding positions include 126–127 (QV), D146, T174, 205–207 (ASR), and D231. R207 is an active-site residue. Residue E236 is part of the active site. H253 serves as the catalytic Proton donor. G256 contributes to the NAD(+) binding site. A substrate-binding site is contributed by Y257.

Belongs to the D-isomer specific 2-hydroxyacid dehydrogenase family. PdxB subfamily. As to quaternary structure, homodimer.

The protein resides in the cytoplasm. The enzyme catalyses 4-phospho-D-erythronate + NAD(+) = (R)-3-hydroxy-2-oxo-4-phosphooxybutanoate + NADH + H(+). Its pathway is cofactor biosynthesis; pyridoxine 5'-phosphate biosynthesis; pyridoxine 5'-phosphate from D-erythrose 4-phosphate: step 2/5. Its function is as follows. Catalyzes the oxidation of erythronate-4-phosphate to 3-hydroxy-2-oxo-4-phosphonooxybutanoate. This is Erythronate-4-phosphate dehydrogenase from Azotobacter vinelandii (strain DJ / ATCC BAA-1303).